We begin with the raw amino-acid sequence, 367 residues long: Innexin inx2 (367 aa).

The Cytoplasmic segment spans residues 1–22 (MFDVFGSVKGLLKIDQVCIDNN). The helical transmembrane segment at 23-43 (VFRMHYKATVIILIAFSLLVT) threads the bilayer. Residues 44–109 (SRQYIGDPID…EDEVKYHKYY (66 aa)) lie on the Extracellular side of the membrane. The chain crosses the membrane as a helical span at residues 110–130 (QWVCFVLFFQAILFYVPRYLW). Residues 130–179 (WKSWEGGRLKMLVMDLNSPIVNDECKNDRKKILVDYFIGNLNRHNFYAFR) are interaction with shg. Topologically, residues 131–179 (KSWEGGRLKMLVMDLNSPIVNDECKNDRKKILVDYFIGNLNRHNFYAFR) are cytoplasmic. The chain crosses the membrane as a helical span at residues 180–200 (FFVCEALNFVNVIGQIYFVDF). At 201 to 266 (FLDGEFSTYG…VLPLNIVNEK (66 aa)) the chain is on the extracellular side. A helical transmembrane segment spans residues 267–287 (IYVFLWFWFIILSIMSGISLI). Topologically, residues 288 to 367 (YRIAVVAGPK…HSAHKRPFDA (80 aa)) are cytoplasmic.

This sequence belongs to the pannexin family. In terms of assembly, monomer and heterooligomer with ogre or Inx3 (via cytoplasmic C-terminal region). Interacts (via cytoplasmic loop) with shg (via cytoplasmic region). Interacts with arm. In ovary, expressed in inner germarial sheath cells, prefollicular cells, follicle cells, nurse cells and oocytes. Expressed in embryonic epithelial cells. Expressed in foregut and hindgut from stage 11-17, segmentally repeated tracheal placodes at stage 14, salivary gland at stage 16 and proventriculus at stage 16-17 (at protein level). During germband extension stage (stage 7), expressed in epidermal epithelial cells. Expressed in cephalic furrow. Repeating epidermal pattern emerges at stage 11, refines to one or two cells at each side of the segment borders by stage 13. Expressed in the imaginal wing disk. In pupae, expressed in the CNS and in primary, secondary and tertiary pigment cells of the retina. Expressed in optic lamina of the adult CNS.

The protein resides in the cell membrane. It localises to the cell junction. The protein localises to the gap junction. It is found in the cytoplasm. Its subcellular location is the apical cell membrane. The protein resides in the apicolateral cell membrane. It localises to the basolateral cell membrane. The protein localises to the lateral cell membrane. Functionally, structural components of the gap junctions. Involved in gap junctional communication between germline and somatic cells which is essential for normal oogenesis. In embryonic epidermis, required for epithelial morphogenesis. Required for keyhole formation during early stages of proventriculus development in response to wg signaling. In follicle cells, promotes the formation of egg chambers in part through regulation of shg and baz at the boundary between germ cells and follicle cells. In inner germarial sheath cells, required for survival of early germ cells and for cyst formation. The sequence is that of Innexin inx2 (Inx2) from Drosophila melanogaster (Fruit fly).